The primary structure comprises 343 residues: RNA 3'-terminal phosphate cyclase (343 aa).

Residues Q102 and 284–288 (FLGDQ) contribute to the ATP site. The active-site Tele-AMP-histidine intermediate is H308.

The protein belongs to the RNA 3'-terminal cyclase family. Type 1 subfamily.

The protein localises to the cytoplasm. The catalysed reaction is a 3'-end 3'-phospho-ribonucleotide-RNA + ATP = a 3'-end 2',3'-cyclophospho-ribonucleotide-RNA + AMP + diphosphate. Catalyzes the conversion of 3'-phosphate to a 2',3'-cyclic phosphodiester at the end of RNA. The mechanism of action of the enzyme occurs in 3 steps: (A) adenylation of the enzyme by ATP; (B) transfer of adenylate to an RNA-N3'P to produce RNA-N3'PP5'A; (C) and attack of the adjacent 2'-hydroxyl on the 3'-phosphorus in the diester linkage to produce the cyclic end product. The biological role of this enzyme is unknown but it is likely to function in some aspects of cellular RNA processing. In Thermococcus kodakarensis (strain ATCC BAA-918 / JCM 12380 / KOD1) (Pyrococcus kodakaraensis (strain KOD1)), this protein is RNA 3'-terminal phosphate cyclase (rtcA).